Here is a 96-residue protein sequence, read N- to C-terminus: Large ribosomal subunit protein uL15 (96 aa).

The protein belongs to the universal ribosomal protein uL15 family. In terms of assembly, part of the 50S ribosomal subunit.

Binds to the 23S rRNA. This is Large ribosomal subunit protein uL15 (rplO) from Streptomyces scabiei.